The chain runs to 308 residues: Transmembrane and ubiquitin-like domain-containing protein 1 (308 aa).

The helical transmembrane segment at 11–31 threads the bilayer; it reads VTVLFALVLFFMVLMLAWVST. The disordered stretch occupies residues 39–162; it reads THWIRPEPAQ…GLGDGTTAQS (124 aa). Positions 63–93 are enriched in polar residues; that stretch reads PSQTLTNADPNSETVDSSDSTQSSREFQNAG. The span at 103 to 115 shows a compositional bias: low complexity; that stretch reads SSSGSTVSTGGSV. The segment covering 132-149 has biased composition (polar residues); it reads PNFTVSSRDPQAGASSSL. Residues 169–242 enclose the Ubiquitin-like domain; it reads IHLRLKFLND…LHCHISQHAS (74 aa). 2 helical membrane-spanning segments follow: residues 253–273 and 283–303; these read VPLN…MLLW and FTGT…AIAF.

It localises to the membrane. The protein resides in the cytoplasm. The protein localises to the nucleus. Its function is as follows. May contribute to the regulation of translation during cell-cycle progression. May contribute to the regulation of cell proliferation. The membrane form is involved in sterol-regulated ubiquitination and degradation of HMG-CoA reductase HMGCR. May be involved in centrosome assembly. The protein is Transmembrane and ubiquitin-like domain-containing protein 1 (tmub1) of Xenopus laevis (African clawed frog).